A 58-amino-acid polypeptide reads, in one-letter code: Small ribosomal subunit protein bS21 (58 aa).

The interval 39–58 (EKPSVKRKRKSEVARKRKKF) is disordered. Residues 43–58 (VKRKRKSEVARKRKKF) are compositionally biased toward basic residues.

The protein belongs to the bacterial ribosomal protein bS21 family.

In Streptococcus pneumoniae (strain ATCC BAA-255 / R6), this protein is Small ribosomal subunit protein bS21.